Consider the following 313-residue polypeptide: Ubiquitin-conjugating enzyme E2 Z (313 aa).

The UBC core domain occupies 58–212; the sequence is QCVLRIKRDI…IRHETIRVAV (155 aa). The Glycyl thioester intermediate role is filled by cysteine 147. The tract at residues 283-313 is disordered; it reads VREKHRKETVDIDSDSSSSETETDTQGSSNP. A compositionally biased stretch (low complexity) spans 297 to 313; it reads DSSSSETETDTQGSSNP.

It belongs to the ubiquitin-conjugating enzyme family.

Its subcellular location is the cytoplasm. The protein resides in the nucleus. It carries out the reaction S-ubiquitinyl-[E1 ubiquitin-activating enzyme]-L-cysteine + [E2 ubiquitin-conjugating enzyme]-L-cysteine = [E1 ubiquitin-activating enzyme]-L-cysteine + S-ubiquitinyl-[E2 ubiquitin-conjugating enzyme]-L-cysteine.. It participates in protein modification; protein ubiquitination. In terms of biological role, catalyzes the covalent attachment of ubiquitin to other proteins. May be involved in apoptosis regulation. In Xenopus tropicalis (Western clawed frog), this protein is Ubiquitin-conjugating enzyme E2 Z (ube2z).